A 574-amino-acid polypeptide reads, in one-letter code: Proline--tRNA ligase (574 aa).

It belongs to the class-II aminoacyl-tRNA synthetase family. ProS type 1 subfamily. Homodimer.

It is found in the cytoplasm. It catalyses the reaction tRNA(Pro) + L-proline + ATP = L-prolyl-tRNA(Pro) + AMP + diphosphate. In terms of biological role, catalyzes the attachment of proline to tRNA(Pro) in a two-step reaction: proline is first activated by ATP to form Pro-AMP and then transferred to the acceptor end of tRNA(Pro). As ProRS can inadvertently accommodate and process non-cognate amino acids such as alanine and cysteine, to avoid such errors it has two additional distinct editing activities against alanine. One activity is designated as 'pretransfer' editing and involves the tRNA(Pro)-independent hydrolysis of activated Ala-AMP. The other activity is designated 'posttransfer' editing and involves deacylation of mischarged Ala-tRNA(Pro). The misacylated Cys-tRNA(Pro) is not edited by ProRS. The polypeptide is Proline--tRNA ligase (Hahella chejuensis (strain KCTC 2396)).